A 654-amino-acid chain; its full sequence is Peptide-N(4)-(N-acetyl-beta-glucosaminyl)asparagine amidase (654 aa).

Alanine 2 carries the N-acetylalanine modification. A PUB domain is found at 30 to 91 (EASKLLLTYA…EGETHLIFPK (62 aa)). The segment at 112–163 (RLDGSNKSHKVKSSQQPAASTQLPTTPSSNPSGLNQHTRNRQGQSSDPPSAS) is disordered. The span at 124 to 163 (SSQQPAASTQLPTTPSSNPSGLNQHTRNRQGQSSDPPSAS) shows a compositional bias: polar residues. Threonine 137 carries the post-translational modification Phosphothreonine. The Zn(2+) site is built by cysteine 250, cysteine 253, cysteine 283, and cysteine 286. The active-site Nucleophile is cysteine 309. Catalysis depends on residues histidine 336 and aspartate 353. The PAW domain occupies 454 to 654 (ELGGRISGSV…LEIIIKFSDL (201 aa)).

This sequence belongs to the transglutaminase-like superfamily. PNGase family. As to quaternary structure, component of a complex required to couple retrotranslocation, ubiquitination and deglycosylation composed of NGLY1, SAKS1, AMFR, VCP and RAD23B. Interacts with the proteasome components RAD23B and PSMC1. Interacts with directly with VCP. Interacts with DERL1, bringing it close to the endoplasmic reticulum membrane. Interacts with SAKS1. Requires Zn(2+) as cofactor.

The protein localises to the cytoplasm. The catalysed reaction is Hydrolysis of an N(4)-(acetyl-beta-D-glucosaminyl)asparagine residue in which the glucosamine residue may be further glycosylated, to yield a (substituted) N-acetyl-beta-D-glucosaminylamine and a peptide containing an aspartate residue.. Its activity is regulated as follows. Inhibited by Z-VAD-fmk, a well-known caspase inhibitor, which inhibits enzyme activity through covalent binding of the carbohydrate to the single Cys-306 residue. Specifically deglycosylates the denatured form of N-linked glycoproteins in the cytoplasm and assists their proteasome-mediated degradation. Cleaves the beta-aspartyl-glucosamine (GlcNAc) of the glycan and the amide side chain of Asn, converting Asn to Asp. Prefers proteins containing high-mannose over those bearing complex type oligosaccharides. Can recognize misfolded proteins in the endoplasmic reticulum that are exported to the cytosol to be destroyed and deglycosylate them, while it has no activity toward native proteins. Deglycosylation is a prerequisite for subsequent proteasome-mediated degradation of some, but not all, misfolded glycoproteins. This Homo sapiens (Human) protein is Peptide-N(4)-(N-acetyl-beta-glucosaminyl)asparagine amidase (NGLY1).